Here is a 379-residue protein sequence, read N- to C-terminus: Homoserine O-succinyltransferase (379 aa).

Residues 51–360 (NAVLICHALS…DSPYGHDAFL (310 aa)) enclose the AB hydrolase-1 domain. Residue S157 is the Nucleophile of the active site. R227 serves as a coordination point for substrate. Active-site residues include D323 and H356. Residue D357 coordinates substrate.

It belongs to the AB hydrolase superfamily. MetX family. Homodimer.

The protein localises to the cytoplasm. The enzyme catalyses L-homoserine + succinyl-CoA = O-succinyl-L-homoserine + CoA. It participates in amino-acid biosynthesis; L-methionine biosynthesis via de novo pathway; O-succinyl-L-homoserine from L-homoserine: step 1/1. In terms of biological role, transfers a succinyl group from succinyl-CoA to L-homoserine, forming succinyl-L-homoserine. The polypeptide is Homoserine O-succinyltransferase (Pseudomonas entomophila (strain L48)).